The primary structure comprises 475 residues: Sulfate adenylyltransferase subunit 1 (475 aa).

A tr-type G domain is found at 25–239 (KSLLRFLTCG…EVLETVEIQR (215 aa)). Residues 34 to 41 (GSVDDGKS) form a G1 region. 34–41 (GSVDDGKS) serves as a coordination point for GTP. Positions 92–96 (GITID) are G2. Positions 113-116 (DTPG) are G3. GTP is bound by residues 113-117 (DTPGH) and 168-171 (NKMD). The G4 stretch occupies residues 168 to 171 (NKMD). The tract at residues 206 to 208 (SAL) is G5.

It belongs to the TRAFAC class translation factor GTPase superfamily. Classic translation factor GTPase family. CysN/NodQ subfamily. As to quaternary structure, heterodimer composed of CysD, the smaller subunit, and CysN.

The enzyme catalyses sulfate + ATP + H(+) = adenosine 5'-phosphosulfate + diphosphate. It participates in sulfur metabolism; hydrogen sulfide biosynthesis; sulfite from sulfate: step 1/3. With CysD forms the ATP sulfurylase (ATPS) that catalyzes the adenylation of sulfate producing adenosine 5'-phosphosulfate (APS) and diphosphate, the first enzymatic step in sulfur assimilation pathway. APS synthesis involves the formation of a high-energy phosphoric-sulfuric acid anhydride bond driven by GTP hydrolysis by CysN coupled to ATP hydrolysis by CysD. This Shigella sonnei (strain Ss046) protein is Sulfate adenylyltransferase subunit 1.